A 731-amino-acid polypeptide reads, in one-letter code: Wall-associated receptor kinase-like 5 (731 aa).

A signal peptide spans 1 to 26 (MKTKTYRFVCLVASVLTLQLMNGSSA). At 27-360 (ATPPPPPNSK…PAKPLVLQGV (334 aa)) the chain is on the extracellular side. Asn-37, Asn-43, Asn-73, Asn-96, Asn-124, Asn-137, Asn-236, and Asn-272 each carry an N-linked (GlcNAc...) asparagine glycan. The interval 285-342 (CLCEYGYFSEMSYRNCYCSLGFTGNPYLRGGCIDNDDCKGPNICEEGTCVNVPGGYRC) is atypical EGF-like. Intrachain disulfides connect Cys-287/Cys-300, Cys-322/Cys-333, and Cys-328/Cys-342. A helical transmembrane segment spans residues 361–381 (LLGLMGLLFLVVGTLGLIIFI). Topologically, residues 382 to 731 (KKRRRIISSR…EDQVMEISRE (350 aa)) are cytoplasmic. Positions 432-705 (FSVKRVLGKG…REASLELERI (274 aa)) constitute a Protein kinase domain. ATP-binding positions include 438–446 (LGKGSQGTV) and Lys-460. Tyr-505 carries the post-translational modification Phosphotyrosine. Asp-557 (proton acceptor) is an active-site residue. A phosphothreonine mark is found at Thr-591 and Thr-596. Residue Tyr-604 is modified to Phosphotyrosine. The disordered stretch occupies residues 709-731 (PEDLEAHIENDDEEDQVMEISRE).

This sequence belongs to the protein kinase superfamily. Ser/Thr protein kinase family. In terms of tissue distribution, preferentially expressed in roots and flowers.

The protein localises to the membrane. It catalyses the reaction L-seryl-[protein] + ATP = O-phospho-L-seryl-[protein] + ADP + H(+). The enzyme catalyses L-threonyl-[protein] + ATP = O-phospho-L-threonyl-[protein] + ADP + H(+). Its function is as follows. Serine/threonine-protein kinase that may function as a signaling receptor of extracellular matrix component. May be involved in plant's response to pathogen infection. In Arabidopsis thaliana (Mouse-ear cress), this protein is Wall-associated receptor kinase-like 5 (WAKL5).